Consider the following 320-residue polypeptide: Peptidase 1 (320 aa).

A signal peptide spans 1–18 (MKIVLAIASLLALSAVYA). The propeptide at 19-98 (RPSSIKTFEE…LKTQFDLNAE (80 aa)) is activation peptide. Disulfide bonds link Cys102-Cys215, Cys129-Cys169, and Cys163-Cys201. The active site involves Cys132. Asn150 is a glycosylation site (N-linked (GlcNAc...) asparagine). Residues His268 and Asn288 contribute to the active site.

It belongs to the peptidase C1 family. In terms of processing, N-glycosylated. N-glycanase treatment does not completely remove carbohydrates, suggesting that the protein contains additional glycosylation sites.

The protein resides in the secreted. The enzyme catalyses Broad endopeptidase specificity.. Functionally, thiol protease, with a preference for substrates with a large hydrophobic side chain in the P2 position, or with basic residues. This is Peptidase 1 (DERP1) from Dermatophagoides pteronyssinus (European house dust mite).